The sequence spans 354 residues: Ephrin-4 (354 aa).

The first 22 residues, 1–22 (MKRPLDFLLAICLILLRSSTFA), serve as a signal peptide directing secretion. The region spanning 23 to 173 (DEHTVHWNST…SKNMRLSMKV (151 aa)) is the Ephrin RBD domain. Asn-30 carries N-linked (GlcNAc...) asparagine glycosylation. 2 disulfides stabilise this stretch: Cys-55–Cys-92 and Cys-80–Cys-162. Residues 173-196 (VLSSQPTPSPSSKPARSRTDARRQ) form a disordered region. The segment covering 175–186 (SSQPTPSPSSKP) has biased composition (low complexity). Ser-335 is lipidated: GPI-anchor amidated serine. Positions 336-354 (SSSLPTFLIVFLIAVNLLF) are cleaved as a propeptide — removed in mature form.

The protein belongs to the ephrin family. Post-translationally, may undergo proteolysis by metalloprotease sup-17 to give rise to a soluble form.

It localises to the cell membrane. In terms of biological role, regulates the formation or stabilization of cell-cell contacts at several stages of epithelial morphogenesis. In early embryonic development, involved in ventral closure of the epidermis. During male tail morphogenesis, regulates precursor cell sorting together with mab-20 and allows the formation of distinct sensory rays. Probably acts as a ligand for lad-2 to regulate axon guidance of several neurons including SDQL, SDQR, SMD and PLN neurons during neurogenesis. The protein is Ephrin-4 (efn-4) of Caenorhabditis briggsae.